The chain runs to 68 residues: DNA gyrase inhibitor YacG (68 aa).

Zn(2+) contacts are provided by C12, C15, C30, and C34. Positions 48-68 (KLKTQDAPTSGKGQHSDDYED) are disordered.

Belongs to the DNA gyrase inhibitor YacG family. Interacts with GyrB. Requires Zn(2+) as cofactor.

Inhibits all the catalytic activities of DNA gyrase by preventing its interaction with DNA. Acts by binding directly to the C-terminal domain of GyrB, which probably disrupts DNA binding by the gyrase. This chain is DNA gyrase inhibitor YacG, found in Acinetobacter baylyi (strain ATCC 33305 / BD413 / ADP1).